Consider the following 311-residue polypeptide: Olfactory receptor 5L2 (311 aa).

The Extracellular portion of the chain corresponds to 1-25 (MGKENCTTVAEFILLGLSDVPELRV). A glycan (N-linked (GlcNAc...) asparagine) is linked at Asn5. The chain crosses the membrane as a helical span at residues 26–46 (CLFLLFLLIYGVTLLANLGMT). Over 47–54 (ALIQVSSR) the chain is Cytoplasmic. Residues 55–75 (LHTPVYFFLSHLSFVDFCYSS) form a helical membrane-spanning segment. At 76-99 (IIVPKMLANIFNKDKAISFLGCMV) the chain is on the extracellular side. The cysteines at positions 97 and 189 are disulfide-linked. Residues 100–120 (QFYLFCTCGVTEVFLLAVMAY) traverse the membrane as a helical segment. Residues 121-139 (DRFVAICNPLLYMVTMSQK) are Cytoplasmic-facing. A helical transmembrane segment spans residues 140 to 160 (LRVELTSCCYFCGTVCSLIHS). Residues 161-196 (SLALRILFYRSNVINHFFCDLPPLLSLACSDVTVNE) are Extracellular-facing. N-linked (GlcNAc...) asparagine glycosylation occurs at Asn195. Residues 197 to 217 (TLLFLVATLNESVTIMIILTS) form a helical membrane-spanning segment. Residues 218–237 (YLLILTTILKIHSAESRHKA) are Cytoplasmic-facing. A helical transmembrane segment spans residues 238 to 258 (FSTCASHLTAITVSHGTILYI). Topologically, residues 259 to 271 (YCRPSSGNSGDVD) are extracellular. The chain crosses the membrane as a helical span at residues 272–292 (KVATVFYTVVIPMLNPLIYSL). At 293 to 311 (RNKDVNKALRKVMGSKIHS) the chain is on the cytoplasmic side.

The protein belongs to the G-protein coupled receptor 1 family.

It localises to the cell membrane. Functionally, odorant receptor. The protein is Olfactory receptor 5L2 (OR5L2) of Homo sapiens (Human).